A 389-amino-acid chain; its full sequence is Stilbene synthase 3 (389 aa).

55-58 provides a ligand contact to substrate; the sequence is KFQR. The active site involves cysteine 164. Residues leucine 267 and 305–307 contribute to the substrate site; that span reads GGR.

Belongs to the thiolase-like superfamily. Chalcone/stilbene synthases family. As to quaternary structure, homodimer.

The protein localises to the cytoplasm. The catalysed reaction is 4-coumaroyl-CoA + 3 malonyl-CoA + 3 H(+) = trans-resveratrol + 4 CO2 + 4 CoA. It functions in the pathway phytoalexin biosynthesis; 3,4',5-trihydroxystilbene biosynthesis; 3,4',5-trihydroxystilbene from trans-4-coumarate: step 2/2. This chain is Stilbene synthase 3, found in Arachis hypogaea (Peanut).